We begin with the raw amino-acid sequence, 284 residues long: Parvulin-like PPIase (284 aa).

A signal peptide spans 1–20; the sequence is MKKLSIVLLSVSMLSSIAFA. Residues 139–232 enclose the PpiC domain; it reads KEQIKVAHIL…YGWHIIKVLE (94 aa).

Belongs to the PpiC/parvulin rotamase family.

The protein localises to the cell outer membrane. It catalyses the reaction [protein]-peptidylproline (omega=180) = [protein]-peptidylproline (omega=0). The protein is Parvulin-like PPIase (plp) of Rickettsia bellii (strain RML369-C).